A 130-amino-acid polypeptide reads, in one-letter code: Glycoprotein hormone alpha-2 (130 aa).

Residues 1-22 (MPMAPRVLLFCLLGLAVTEGHG) form the signal peptide. Disulfide bonds link Cys32-Cys90, Cys49-Cys104, Cys58-Cys120, and Cys62-Cys122. Asn38 and Asn82 each carry an N-linked (GlcNAc...) asparagine glycan.

This sequence belongs to the glycoprotein hormones subunit alpha family. As to quaternary structure, heterodimer with GPHB5; this heterodimer interacts with thyroid-stimulating hormone receptor (TSHR), and hence stimulates cAMP production.

Its subcellular location is the secreted. Functions as a heterodimeric glycoprotein hormone with GPHB5 able to bind and activate the thyroid-stimulating hormone receptor (TSHR), leading to increased cAMP production. Plays a central role in controlling thyroid cell metabolism. The protein is Glycoprotein hormone alpha-2 (Gpha2) of Rattus norvegicus (Rat).